Reading from the N-terminus, the 151-residue chain is D-aminoacyl-tRNA deacylase (151 aa).

A Gly-cisPro motif, important for rejection of L-amino acids motif is present at residues 137–138 (GP).

Belongs to the DTD family. Homodimer.

The protein localises to the cytoplasm. It catalyses the reaction glycyl-tRNA(Ala) + H2O = tRNA(Ala) + glycine + H(+). The enzyme catalyses a D-aminoacyl-tRNA + H2O = a tRNA + a D-alpha-amino acid + H(+). In terms of biological role, an aminoacyl-tRNA editing enzyme that deacylates mischarged D-aminoacyl-tRNAs. Also deacylates mischarged glycyl-tRNA(Ala), protecting cells against glycine mischarging by AlaRS. Acts via tRNA-based rather than protein-based catalysis; rejects L-amino acids rather than detecting D-amino acids in the active site. By recycling D-aminoacyl-tRNA to D-amino acids and free tRNA molecules, this enzyme counteracts the toxicity associated with the formation of D-aminoacyl-tRNA entities in vivo and helps enforce protein L-homochirality. In Azoarcus sp. (strain BH72), this protein is D-aminoacyl-tRNA deacylase.